We begin with the raw amino-acid sequence, 669 residues long: DNA mismatch repair protein MutL (669 aa).

Residues 356–377 form a disordered region; sequence FEQRQNTENNQEKTFSSEESNS. A compositionally biased stretch (polar residues) spans 361-377; sequence NTENNQEKTFSSEESNS.

It belongs to the DNA mismatch repair MutL/HexB family.

Its function is as follows. This protein is involved in the repair of mismatches in DNA. It is required for dam-dependent methyl-directed DNA mismatch repair. May act as a 'molecular matchmaker', a protein that promotes the formation of a stable complex between two or more DNA-binding proteins in an ATP-dependent manner without itself being part of a final effector complex. In Staphylococcus aureus (strain MSSA476), this protein is DNA mismatch repair protein MutL.